A 99-amino-acid chain; its full sequence is Putative RNA-binding protein RbpE (99 aa).

The RRM domain maps to 2–79 (SIYVGNLSYS…RVLKVNKARP (78 aa)). The disordered stretch occupies residues 78 to 99 (RPREEKGARSGGGSWSRNNGGY). Over residues 86 to 99 (RSGGGSWSRNNGGY) the composition is skewed to gly residues.

This chain is Putative RNA-binding protein RbpE (rbpE), found in Nostoc sp. (strain PCC 7120 / SAG 25.82 / UTEX 2576).